The sequence spans 160 residues: SIVTKSIVNADAEARYLSPGELDRIKSFVSSGEKRLRIAQILTDNRERIVKQAGDQLFQKRPDVVSPGGNAYGQEMTATCLRDLDYYLRLITYGIVAGDVTPIEEIGIVGVREMYKSLGTPIDAVAAGVSAMKNVASSILSAEDAAEAGAYFDYVAGALA.

Residue Asn70 is modified to N4-methylasparagine. Cys80 serves as a coordination point for (2R,3E)-phycocyanobilin.

It belongs to the phycobiliprotein family. In terms of assembly, component of the phycobilisome. Heterodimer of an alpha and a beta chain. Contains one covalently linked phycocyanobilin chromophore.

It localises to the cellular thylakoid membrane. Light-harvesting photosynthetic bile pigment-protein from the phycobiliprotein complex. Allophycocyanin has a maximum absorption at approximately 650 nanometers. This chain is Allophycocyanin alpha chain (apcA), found in Mastigocladus laminosus (Fischerella sp.).